The following is a 342-amino-acid chain: Aldo-keto reductase pigE (342 aa).

Positions 1–27 are cleaved as a signal peptide; sequence MGSISPKTRFPIVLGAGLIGSPGLFEG. Asp52 is an NADP(+) binding site. Tyr57 functions as the Proton donor in the catalytic mechanism. The NADP(+) site is built by Gln182 and Arg236. N-linked (GlcNAc...) asparagine glycosylation is present at Asn271.

The protein belongs to the aldo/keto reductase family. Aldo/keto reductase 2 subfamily.

It participates in secondary metabolite biosynthesis. In terms of biological role, aldo-keto reductase; part of the gene cluster that mediates the biosynthesis of azaphilone pigments (MonAzPs), a complex mixture of compounds with a common azaphilone skeleton very widely used as food colorants. Within the pathway, pigE is involved in the dehydration of the C-11 alcohol followed by the reduction of the C6(7) double bond which increases the electrophilicity of the C-5 ketone of the resulting acyl benzopyran and allows the intramolecular Knoevenagel aldol condensation with the C-20 enol of the side chain to yield the characteristic linear tricyclic carbon skeletons of the yellow pigments. The first step of the pathway is performed by the nrPKS pigA that forms the hexaketide precursor from successive condensations of five malonyl-CoA units, with a simple acetyl-CoA starter unit. The role of esterase pigG is not clear, but it may play at most a supplementary role in the formation of the benzaldehyde produced by the pigA nrPKS. This very reactive benzaldehyde is intercepted by the pigC ketoreductase that to provide the first stable enzyme-free MonAzPs intermediate, 6-(4-hydroxy-2-oxopentyl)-3-methyl-2,4-dioxocyclohexane carbaldehyde, also known as M7PKS-1. The FAD-dependent monooxygenase pigN hydroxylates M7PKS-1 at C-4, which triggers the formation of the pyran ring. PigJ, pigK and pigD are involved in the acetylation of the pyran ring. PigJ and pigK form the two subunits of a dedicated fungal FAS that produces the side chain fatty acyl moiety of MonAzPs and pigD transfers the fatty acyl chain to the C-4 alcohol. PigM and pigO are involved in the elimination of the omega-1 alcohol. PigM acts as an O-acetyltransferase that synthesizes the putative O-11 acetyl intermediate whereas pigO eliminates acetic acid to yield an intermediate with a C10(11) double bond. The dehydration of the C-11 alcohol followed by the reduction of the C6(7) double bond by the NAD(P)H-dependent oxidoreductase pigE increases the electrophilicity of the C-5 ketone of the resulting acyl benzopyran. This in turn sets up the C-5 ketone for an intramolecular Knoevenagel aldol condensation with the C-20 enol of the side chain. This condensation affords the characteristic linear tricyclic carbon skeletons of the yellow pigments that serve as the common precursors for the classical yellow pigments monascin and ankaflavin, orange pigments rubopunctatin and monascorubrin, and red pigments ribropunctamine and monascorubramine. The FAD-dependent oxidoreductase pigF is especially invoved in the biosynthesis of orange and red pigments via desaturation of C6(7). The sequence is that of Aldo-keto reductase pigE from Monascus ruber (Mold).